A 275-amino-acid chain; its full sequence is Large ribosomal subunit protein uL2c (275 aa).

The interval 219–255 (TVRGSVMNPCDHPHGGGEGRAPIGRTRPLTPWGKPAL) is disordered.

Belongs to the universal ribosomal protein uL2 family. As to quaternary structure, part of the 50S ribosomal subunit.

The protein resides in the plastid. Its subcellular location is the chloroplast. This Trieres chinensis (Marine centric diatom) protein is Large ribosomal subunit protein uL2c (rpl2).